Reading from the N-terminus, the 534-residue chain is Glucans biosynthesis protein D (534 aa).

Positions M1–A26 form a signal peptide, tat-type signal.

This sequence belongs to the OpgD/OpgG family. Predicted to be exported by the Tat system. The position of the signal peptide cleavage has not been experimentally proven.

Its subcellular location is the periplasm. It participates in glycan metabolism; osmoregulated periplasmic glucan (OPG) biosynthesis. Its function is as follows. Probably involved in the control of the structural glucose backbone of osmoregulated periplasmic glucans (OPGs). The protein is Glucans biosynthesis protein D of Stenotrophomonas maltophilia (strain R551-3).